A 282-amino-acid chain; its full sequence is D-alanine aminotransferase (282 aa).

Residue tyrosine 32 participates in substrate binding. Pyridoxal 5'-phosphate is bound at residue arginine 51. Residues arginine 99 and histidine 101 each coordinate substrate. Residue lysine 146 is the Proton acceptor of the active site. An N6-(pyridoxal phosphate)lysine modification is found at lysine 146. Residue glutamate 178 participates in pyridoxal 5'-phosphate binding.

Belongs to the class-IV pyridoxal-phosphate-dependent aminotransferase family. In terms of assembly, homodimer. The cofactor is pyridoxal 5'-phosphate.

It carries out the reaction D-alanine + 2-oxoglutarate = D-glutamate + pyruvate. Acts on the D-isomers of alanine, leucine, aspartate, glutamate, aminobutyrate, norvaline and asparagine. The enzyme transfers an amino group from a substrate D-amino acid to the pyridoxal phosphate cofactor to form pyridoxamine and an alpha-keto acid in the first half-reaction. The second half-reaction is the reverse of the first, transferring the amino group from the pyridoxamine to a second alpha-keto acid to form the product D-amino acid via a ping-pong mechanism. This is an important process in the formation of D-alanine and D-glutamate, which are essential bacterial cell wall components. The chain is D-alanine aminotransferase (dat) from Staphylococcus aureus (strain MSSA476).